Reading from the N-terminus, the 116-residue chain is Non-specific lipid-transfer protein D, cotyledon-specific isoform (116 aa).

The signal sequence occupies residues 1–24; sequence MKNIFFSVFFLLSFLLCLANVSEA. 4 disulfides stabilise this stretch: Cys-28–Cys-76, Cys-38–Cys-53, Cys-54–Cys-98, and Cys-74–Cys-112.

The protein belongs to the plant LTP family.

Functionally, plant non-specific lipid-transfer proteins transfer phospholipids as well as galactolipids across membranes. May play a role in wax or cutin deposition in the cell walls of expanding epidermal cells and certain secretory tissues. This is Non-specific lipid-transfer protein D, cotyledon-specific isoform from Ricinus communis (Castor bean).